The chain runs to 298 residues: ADP/ATP translocase 3 (298 aa).

Position 1 is an N-acetylmethionine (Met-1). The Mitochondrial intermembrane portion of the chain corresponds to 1 to 7; that stretch reads MTEQAIS. At Thr-2 the chain carries N-acetylthreonine; in ADP/ATP translocase 3, N-terminally processed. The Solcar 1 repeat unit spans residues 6–98; sequence ISFAKDFLAG…FAFKDKYKQI (93 aa). Residues 8–37 form a helical membrane-spanning segment; sequence FAKDFLAGGIAAAISKTAVAPIERVKLLLQ. Residues 38-74 lie on the Mitochondrial matrix side of the membrane; sequence VQHASKQIAADKQYKGIVDCIVRIPKEQGVLSFWRGN. N6,N6,N6-trimethyllysine is present on Lys-52. Residues 75-99 traverse the membrane as a helical segment; that stretch reads LANVIRYFPTQALNFAFKDKYKQIF. Arg-80 and Lys-92 together coordinate ADP. At 100-109 the chain is on the mitochondrial intermembrane side; the sequence is LGGVDKHTQF. At Lys-105 the chain carries N6-acetyllysine. Residues 110-130 form a helical membrane-spanning segment; that stretch reads WRYFAGNLASGGAAGATSLCF. 2 Solcar repeats span residues 111-201 and 212-297; these read RYFA…AKGM and VSWM…LKKV. Over 131–178 the chain is Mitochondrial matrix; the sequence is VYPLDFARTRLAADVGKSATEREFKGLGDCLVKITKSDGIRGLYQGFN. A helical transmembrane segment spans residues 179–199; it reads VSVQGIIIYRAAYFGVYGTAK. Residues 200–210 lie on the Mitochondrial intermembrane side of the membrane; the sequence is GMLPDPRNTHI. The helical transmembrane segment at 211–231 threads the bilayer; it reads VVSWMIAQTVTAVAGVFSYPF. At 232–273 the chain is on the mitochondrial matrix side; the sequence is DTVRRRMMMQSGRKGADIMYKGTLDCWRKIFKDEGGKAFFKG. ADP is bound at residue Arg-235. Positions 235-240 are important for transport activity; it reads RRRMMM. The Nucleotide carrier signature motif signature appears at 235-240; that stretch reads RRRMMM. Lys-268 carries the post-translational modification N6-acetyllysine. Residues 274–291 traverse the membrane as a helical segment; the sequence is AWSNVLRGMGGAFVLVLY. Residues 292-298 are Mitochondrial intermembrane-facing; it reads DELKKVI.

The protein belongs to the mitochondrial carrier (TC 2.A.29) family. Monomer. Found in a complex with ARL2, ARL2BP and SLC25A6/ANT3. Trimethylated by ANTKMT at Lys-52.

It localises to the mitochondrion inner membrane. The protein resides in the membrane. The enzyme catalyses ADP(in) + ATP(out) = ADP(out) + ATP(in). The catalysed reaction is H(+)(in) = H(+)(out). Its activity is regulated as follows. The matrix-open state (m-state) is inhibited by the membrane-permeable bongkrekic acid (BKA). The cytoplasmic-open state (c-state) is inhibited by the membrane-impermeable toxic inhibitor carboxyatractyloside (CATR). Proton transporter activity is inhibited by ADP:ATP antiporter activity. Functionally, ADP:ATP antiporter that mediates import of ADP into the mitochondrial matrix for ATP synthesis, and export of ATP out to fuel the cell. Cycles between the cytoplasmic-open state (c-state) and the matrix-open state (m-state): operates by the alternating access mechanism with a single substrate-binding site intermittently exposed to either the cytosolic (c-state) or matrix (m-state) side of the inner mitochondrial membrane. In addition to its ADP:ATP antiporter activity, also involved in mitochondrial uncoupling and mitochondrial permeability transition pore (mPTP) activity. Plays a role in mitochondrial uncoupling by acting as a proton transporter: proton transport uncouples the proton flows via the electron transport chain and ATP synthase to reduce the efficiency of ATP production and cause mitochondrial thermogenesis. Proton transporter activity is inhibited by ADP:ATP antiporter activity, suggesting that SLC25A6/ANT3 acts as a master regulator of mitochondrial energy output by maintaining a delicate balance between ATP production (ADP:ATP antiporter activity) and thermogenesis (proton transporter activity). Proton transporter activity requires free fatty acids as cofactor, but does not transport it. Also plays a key role in mPTP opening, a non-specific pore that enables free passage of the mitochondrial membranes to solutes of up to 1.5 kDa, and which contributes to cell death. It is however unclear if SLC25A6/ANT3 constitutes a pore-forming component of mPTP or regulates it. This chain is ADP/ATP translocase 3, found in Sus scrofa (Pig).